Consider the following 339-residue polypeptide: Glycerol-3-phosphate dehydrogenase [NAD(P)+] (339 aa).

Positions 15, 16, 36, and 110 each coordinate NADPH. Residues lysine 110, glycine 139, and threonine 141 each contribute to the sn-glycerol 3-phosphate site. Alanine 143 lines the NADPH pocket. Residues lysine 195, aspartate 248, serine 258, arginine 259, and asparagine 260 each coordinate sn-glycerol 3-phosphate. Residue lysine 195 is the Proton acceptor of the active site. Arginine 259 contributes to the NADPH binding site. The NADPH site is built by valine 283 and glutamate 285.

It belongs to the NAD-dependent glycerol-3-phosphate dehydrogenase family.

It is found in the cytoplasm. It catalyses the reaction sn-glycerol 3-phosphate + NAD(+) = dihydroxyacetone phosphate + NADH + H(+). The enzyme catalyses sn-glycerol 3-phosphate + NADP(+) = dihydroxyacetone phosphate + NADPH + H(+). It participates in membrane lipid metabolism; glycerophospholipid metabolism. Catalyzes the reduction of the glycolytic intermediate dihydroxyacetone phosphate (DHAP) to sn-glycerol 3-phosphate (G3P), the key precursor for phospholipid synthesis. In Serratia proteamaculans (strain 568), this protein is Glycerol-3-phosphate dehydrogenase [NAD(P)+].